A 301-amino-acid chain; its full sequence is UDP-3-O-acyl-N-acetylglucosamine deacetylase (301 aa).

Zn(2+) contacts are provided by His-75, His-233, and Asp-237. His-260 acts as the Proton donor in catalysis.

Belongs to the LpxC family. Requires Zn(2+) as cofactor.

The enzyme catalyses a UDP-3-O-[(3R)-3-hydroxyacyl]-N-acetyl-alpha-D-glucosamine + H2O = a UDP-3-O-[(3R)-3-hydroxyacyl]-alpha-D-glucosamine + acetate. Its pathway is glycolipid biosynthesis; lipid IV(A) biosynthesis; lipid IV(A) from (3R)-3-hydroxytetradecanoyl-[acyl-carrier-protein] and UDP-N-acetyl-alpha-D-glucosamine: step 2/6. Its function is as follows. Catalyzes the hydrolysis of UDP-3-O-myristoyl-N-acetylglucosamine to form UDP-3-O-myristoylglucosamine and acetate, the committed step in lipid A biosynthesis. This Aliarcobacter butzleri (strain RM4018) (Arcobacter butzleri) protein is UDP-3-O-acyl-N-acetylglucosamine deacetylase.